A 295-amino-acid polypeptide reads, in one-letter code: Methionine aminopeptidase (295 aa).

Residue His63 coordinates substrate. A divalent metal cation is bound by residues Asp83, Asp94, and His154. His162 is a substrate binding site. The a divalent metal cation site is built by Glu188 and Glu281.

The protein belongs to the peptidase M24A family. Methionine aminopeptidase archaeal type 2 subfamily. Monomer. The cofactor is Fe(2+). It depends on Co(2+) as a cofactor. Ni(2+) serves as cofactor. Mn(2+) is required as a cofactor.

The catalysed reaction is Release of N-terminal amino acids, preferentially methionine, from peptides and arylamides.. In terms of biological role, removes the N-terminal methionine from nascent proteins. The N-terminal methionine is often cleaved when the second residue in the primary sequence is small and uncharged (Met-Ala-, Cys, Gly, Pro, Ser, Thr, or Val). The protein is Methionine aminopeptidase of Thermococcus onnurineus (strain NA1).